Consider the following 245-residue polypeptide: tRNA1(Val) (adenine(37)-N6)-methyltransferase (245 aa).

The protein belongs to the methyltransferase superfamily. tRNA (adenine-N(6)-)-methyltransferase family.

The protein localises to the cytoplasm. The enzyme catalyses adenosine(37) in tRNA1(Val) + S-adenosyl-L-methionine = N(6)-methyladenosine(37) in tRNA1(Val) + S-adenosyl-L-homocysteine + H(+). In terms of biological role, specifically methylates the adenine in position 37 of tRNA(1)(Val) (anticodon cmo5UAC). The sequence is that of tRNA1(Val) (adenine(37)-N6)-methyltransferase from Cronobacter sakazakii (strain ATCC BAA-894) (Enterobacter sakazakii).